The sequence spans 836 residues: Glutamate receptor ionotropic, kainate 1 (836 aa).

An N-terminal signal peptide occupies residues M1–P30. Over Q31–P561 the chain is Extracellular. 7 N-linked (GlcNAc...) asparagine glycosylation sites follow: N68, N74, N276, N379, N413, N424, and N431. L-glutamate contacts are provided by P516, T518, and R523. N546 carries N-linked (GlcNAc...) asparagine glycosylation. A helical membrane pass occupies residues D562–A582. Topologically, residues R583–G638 are cytoplasmic. The chain crosses the membrane as a helical span at residues I639–L659. The Extracellular portion of the chain corresponds to T660–N721. Residues S689 and T690 each coordinate L-glutamate. A helical transmembrane segment spans residues I722–G742. The Cytoplasmic portion of the chain corresponds to E743 to A836.

The protein belongs to the glutamate-gated ion channel (TC 1.A.10.1) family. GRIK1 subfamily. In terms of assembly, homotetramer or heterotetramer of pore-forming glutamate receptor subunits. Tetramers may be formed by the dimerization of dimers. Can form functional heteromeric receptors with GRIK4 and GRIK5. Interacts with KLHL17. Most abundant in the cerebellum. Also present in the suprachiasmatic nuclei of the hypothalamus.

Its subcellular location is the cell membrane. It localises to the postsynaptic cell membrane. It catalyses the reaction Ca(2+)(in) = Ca(2+)(out). In terms of biological role, ionotropic glutamate receptor that functions as a cation-permeable ligand-gated ion channel, gated by L-glutamate and the glutamatergic agonist kainic acid. L-glutamate acts as an excitatory neurotransmitter at many synapses in the central nervous system. Binding of the excitatory neurotransmitter L-glutamate induces a conformation change, leading to the opening of the cation channel, and thereby converts the chemical signal to an electrical impulse. The receptor then desensitizes rapidly and enters a transient inactive state, characterized by the presence of bound agonist. The sequence is that of Glutamate receptor ionotropic, kainate 1 (Grik1) from Mus musculus (Mouse).